The following is a 360-amino-acid chain: Phospho-N-acetylmuramoyl-pentapeptide-transferase (360 aa).

A run of 10 helical transmembrane segments spans residues 21–41 (YLSFRAILSVLTALGLSLWMG), 73–93 (TMGGVMILAAISITILLWANL), 94–114 (SNPYVWAVLAVLMGYGAVGFV), 132–152 (WKYFWQSAIALIVAFALYAYG), 168–188 (VMPQLGLMYIVLTYFVIVGTS), 199–219 (GLAIMPTVLVAAGFAVIAWAT), 236–256 (ASELVVVCTAIVGAGLGFLWF), 263–283 (VFMGDVGSLALGGALGTIAVL), 288–308 (LVLVIMGGVFVMETLSVILQV), and 338–358 (VIVRFWIISMVLVLIGLATLK).

It belongs to the glycosyltransferase 4 family. MraY subfamily. Mg(2+) serves as cofactor.

It is found in the cell inner membrane. The enzyme catalyses UDP-N-acetyl-alpha-D-muramoyl-L-alanyl-gamma-D-glutamyl-meso-2,6-diaminopimeloyl-D-alanyl-D-alanine + di-trans,octa-cis-undecaprenyl phosphate = di-trans,octa-cis-undecaprenyl diphospho-N-acetyl-alpha-D-muramoyl-L-alanyl-D-glutamyl-meso-2,6-diaminopimeloyl-D-alanyl-D-alanine + UMP. It participates in cell wall biogenesis; peptidoglycan biosynthesis. In terms of biological role, catalyzes the initial step of the lipid cycle reactions in the biosynthesis of the cell wall peptidoglycan: transfers peptidoglycan precursor phospho-MurNAc-pentapeptide from UDP-MurNAc-pentapeptide onto the lipid carrier undecaprenyl phosphate, yielding undecaprenyl-pyrophosphoryl-MurNAc-pentapeptide, known as lipid I. The sequence is that of Phospho-N-acetylmuramoyl-pentapeptide-transferase from Vibrio vulnificus (strain CMCP6).